Consider the following 465-residue polypeptide: MAFTPGKWIHMVGIAGAGMSGIARVLAQQGYKVSGSDLQVNDTTSRLEEIGVEIFKGHSSSNLKEGVDLLVTSSAVPQDNIELRLAREKKIPILKRGQMLAHLANAKKAVAVAGAHGKTTTTSMLYMVLANCGTEPSFIVGGELQGSELNAKLGRGDYFVVEADESDASFLDLRPYIALITNVEDDHLDYYKSVDNIRKAFRQFVEQIRPEGFAMLYGGDAFNRSLVKDLTLNKRLLFYGEDLSNDYYFLNWESIGLGSHFDVYKRELGFLGRFELAVPGKHNALNALAAIASALELGLEMEPIKSALKNFHGARRRFQIQGQKALVTVVDDYAHHPTEIRATIDAARNFHSGRVIVVYQPHRYSRTQLLGRQLGEALINADLAIITEVYSAGEEAIPGISGEVVCQAAQSIGCHSVYIPQREEIIPYLLQICQENDLIITMGAGDIWKLGLQLLEVLPESVLKV.

114–120 (GAHGKTT) lines the ATP pocket.

Belongs to the MurCDEF family.

The protein localises to the cytoplasm. It carries out the reaction UDP-N-acetyl-alpha-D-muramate + L-alanine + ATP = UDP-N-acetyl-alpha-D-muramoyl-L-alanine + ADP + phosphate + H(+). It functions in the pathway cell wall biogenesis; peptidoglycan biosynthesis. Its function is as follows. Cell wall formation. This chain is UDP-N-acetylmuramate--L-alanine ligase, found in Syntrophomonas wolfei subsp. wolfei (strain DSM 2245B / Goettingen).